The chain runs to 376 residues: Serpin B6 (376 aa).

At M1 the chain carries N-acetylmethionine. A Phosphoserine modification is found at S151. K195 carries the N6-acetyllysine modification.

The protein belongs to the serpin family. Ov-serpin subfamily. As to quaternary structure, forms a complex with the monomeric form of beta-tryptase.

It localises to the cytoplasm. Its function is as follows. Inhibitor of cathepsin G, kallikrein-8 and thrombin. May play an important role in the inner ear in the protection against leakage of lysosomal content during stress. May be involved in the regulation of serine proteinases present in the brain or extravasated from the blood. The chain is Serpin B6 (SERPINB6) from Pongo abelii (Sumatran orangutan).